The following is a 1829-amino-acid chain: DNA polymerase (1829 aa).

2 DOD-type homing endonuclease domains span residues 527–668 (LSGI…SLGI) and 1136–1269 (FLGY…SLGV).

Belongs to the DNA polymerase type-B family. This protein undergoes a protein self splicing that involves a post-translational excision of the three intervening regions (inteins) followed by peptide ligation.

The catalysed reaction is DNA(n) + a 2'-deoxyribonucleoside 5'-triphosphate = DNA(n+1) + diphosphate. The protein is DNA polymerase (pol) of Thermococcus aggregans.